The sequence spans 933 residues: Probable Rho-type GTPase-activating protein 4 (933 aa).

LIM zinc-binding domains follow at residues 22 to 80 (CFCI…LCVD) and 81 to 129 (ICNG…CLPC). Disordered regions lie at residues 181–200 (PSSV…NSLR) and 304–338 (ENGT…STTT). Polar residues predominate over residues 325-338 (RSSTMNYKSVSTTT). Ser353 carries the phosphoserine modification. 3 disordered regions span residues 415–435 (RLSS…NYEA), 605–628 (SSSF…SPRE), and 641–660 (GFRP…KRNS). Over residues 619 to 628 (RTISTPSPRE) the composition is skewed to polar residues. Ser625 carries the post-translational modification Phosphoserine. The segment covering 643-652 (RPKDNKDKES) has biased composition (basic and acidic residues). Phosphoserine is present on residues Ser738 and Ser740. The Rho-GAP domain occupies 753–932 (NRLTLLRVPT…FLIDHVHEVF (180 aa)).

Functionally, GTPase-activating protein for Rho-type proteins. The chain is Probable Rho-type GTPase-activating protein 4 (rga4) from Schizosaccharomyces pombe (strain 972 / ATCC 24843) (Fission yeast).